Consider the following 98-residue polypeptide: ESAT-6-like protein EsxK (98 aa).

The protein belongs to the WXG100 family. CFP-10 subfamily. As to quaternary structure, strongly interacts with EsxL to form a heterodimeric complex under reducing conditions.

It is found in the secreted. This is ESAT-6-like protein EsxK from Mycobacterium tuberculosis (strain CDC 1551 / Oshkosh).